Consider the following 231-residue polypeptide: RNA pyrophosphohydrolase (231 aa).

The Nudix hydrolase domain occupies 6–149 (GFRPNVGIIL…KRDVYQLALT (144 aa)). Positions 38-59 (GGIKYGETPVQAMYRELHEETG) match the Nudix box motif. Positions 157 to 190 (RPQPRTERPGGHHHGQRYPRMASSVNAPPGASMA) are disordered.

The protein belongs to the Nudix hydrolase family. RppH subfamily. Requires a divalent metal cation as cofactor.

Accelerates the degradation of transcripts by removing pyrophosphate from the 5'-end of triphosphorylated RNA, leading to a more labile monophosphorylated state that can stimulate subsequent ribonuclease cleavage. This Paraburkholderia phymatum (strain DSM 17167 / CIP 108236 / LMG 21445 / STM815) (Burkholderia phymatum) protein is RNA pyrophosphohydrolase.